The sequence spans 331 residues: L-lactate dehydrogenase A chain (331 aa).

Residues glycine 29–lysine 57 and arginine 98 each bind NAD(+). The substrate site is built by arginine 105, asparagine 137, and arginine 168. NAD(+) is bound at residue asparagine 137. Histidine 192 acts as the Proton acceptor in catalysis. Threonine 247 serves as a coordination point for substrate.

The protein belongs to the LDH/MDH superfamily. LDH family. Homotetramer.

The protein localises to the cytoplasm. It carries out the reaction (S)-lactate + NAD(+) = pyruvate + NADH + H(+). It participates in fermentation; pyruvate fermentation to lactate; (S)-lactate from pyruvate: step 1/1. Functionally, interconverts simultaneously and stereospecifically pyruvate and lactate with concomitant interconversion of NADH and NAD(+). This Notothenia neglecta (Yellowbelly rockcod) protein is L-lactate dehydrogenase A chain (ldha).